Consider the following 187-residue polypeptide: Large ribosomal subunit protein uL22 (187 aa).

Composition is skewed to basic and acidic residues over residues 158-168 and 178-187; these read TKATDESEQAK and RQKEKMMRNE. Residues 158 to 187 form a disordered region; it reads TKATDESEQAKKKLSKKKLQRQKEKMMRNE.

The protein belongs to the universal ribosomal protein uL22 family.

This Anopheles gambiae (African malaria mosquito) protein is Large ribosomal subunit protein uL22 (RpL17).